We begin with the raw amino-acid sequence, 118 residues long: UPF0102 protein Francci3_3586 (118 aa).

It belongs to the UPF0102 family.

In Frankia casuarinae (strain DSM 45818 / CECT 9043 / HFP020203 / CcI3), this protein is UPF0102 protein Francci3_3586.